The sequence spans 156 residues: Small ribosomal subunit protein uS7 (156 aa).

The protein belongs to the universal ribosomal protein uS7 family. As to quaternary structure, part of the 30S ribosomal subunit. Contacts proteins S9 and S11.

One of the primary rRNA binding proteins, it binds directly to 16S rRNA where it nucleates assembly of the head domain of the 30S subunit. Is located at the subunit interface close to the decoding center, probably blocks exit of the E-site tRNA. This chain is Small ribosomal subunit protein uS7, found in Mycobacterium leprae (strain TN).